The chain runs to 358 residues: Trace amine-associated receptor 7b (358 aa).

At M1 to R47 the chain is on the extracellular side. A glycan (N-linked (GlcNAc...) asparagine) is linked at N34. Disulfide bonds link C37/C201 and C120/C205. A helical transmembrane segment spans residues L48 to V68. Topologically, residues M69–N83 are cytoplasmic. A helical membrane pass occupies residues F84–S104. The Extracellular portion of the chain corresponds to M105 to S125. A helical membrane pass occupies residues F126 to I147. Topologically, residues A148–K166 are cytoplasmic. Residues C167–V187 traverse the membrane as a helical segment. The Extracellular segment spans residues N188 to Q211. Residue N210 is glycosylated (N-linked (GlcNAc...) asparagine). A helical membrane pass occupies residues S212 to Y232. The Cytoplasmic portion of the chain corresponds to S233–T274. The helical transmembrane segment at L275–I295 threads the bilayer. Over D296–E309 the chain is Extracellular. The helical transmembrane segment at I310–W332 threads the bilayer. Residues F333 to E358 lie on the Cytoplasmic side of the membrane.

It belongs to the G-protein coupled receptor 1 family.

Its subcellular location is the cell membrane. Functionally, olfactory receptor specific for N,N-dimethylalkylamines trace amines, such as N,N-dimethylcyclohexylamine. Trace amine compounds are enriched in animal body fluids and act on trace amine-associated receptors (TAARs) to elicit both intraspecific and interspecific innate behaviors. Ligand-binding causes a conformation change that triggers signaling via G(s)-class of G alpha proteins (GNAL or GNAS). The sequence is that of Trace amine-associated receptor 7b from Rattus norvegicus (Rat).